Consider the following 144-residue polypeptide: MVALKTCSLLLVLLFLAVGLGEKEEVEFRSHAKFAGPRPRGPRYAEGTFISDYSIAMDKIRQQDFVNWLLAQRGKKSDWKHNITQREARALVLAGQSQGKEDKEAQESSLPKSLSDDDVLRDLLIQELLAWMVDQTELCRLRSQ.

The first 21 residues, Met-1–Gly-21, serve as a signal peptide directing secretion. Propeptides lie at residues Glu-22–Pro-42 and Glu-87–Gln-144. Residues Ala-94–Ser-113 are disordered.

It belongs to the glucagon family.

It is found in the secreted. Functionally, potent stimulator of insulin secretion and relatively poor inhibitor of gastric acid secretion. This Mus musculus (Mouse) protein is Gastric inhibitory polypeptide (Gip).